The primary structure comprises 179 residues: Ribulose bisphosphate carboxylase small subunit, chloroplastic 1/4 (179 aa).

The N-terminal 58 residues, 1 to 58 (MAASSTMLSSVATAACAAPAQASMVAPFVGLKSTSAFPVTQKPATGLSTLPSNGGRVQ), are a transit peptide targeting the chloroplast.

Belongs to the RuBisCO small chain family. As to quaternary structure, heterohexadecamer of 8 large and 8 small subunits.

The protein localises to the plastid. It localises to the chloroplast. Its function is as follows. RuBisCO catalyzes two reactions: the carboxylation of D-ribulose 1,5-bisphosphate, the primary event in carbon dioxide fixation, as well as the oxidative fragmentation of the pentose substrate. Both reactions occur simultaneously and in competition at the same active site. Although the small subunit is not catalytic it is essential for maximal activity. The polypeptide is Ribulose bisphosphate carboxylase small subunit, chloroplastic 1/4 (RBCS1) (Fritillaria agrestis (Stinkbells)).